A 217-amino-acid chain; its full sequence is UPF0193 protein EVG1 (217 aa).

The protein belongs to the UPF0193 (EVG1) family.

This Homo sapiens (Human) protein is UPF0193 protein EVG1 (C22orf23).